A 97-amino-acid polypeptide reads, in one-letter code: Large ribosomal subunit protein bL27 (97 aa).

Residues 1–12 constitute a propeptide that is removed on maturation; it reads MLKMNLANLQLF. Residues 14 to 37 are disordered; that stretch reads HKKGGGSTSNGRDSQAKRLGAKAA.

Belongs to the bacterial ribosomal protein bL27 family. In terms of processing, the N-terminus is cleaved by ribosomal processing cysteine protease Prp.

The sequence is that of Large ribosomal subunit protein bL27 from Streptococcus uberis (strain ATCC BAA-854 / 0140J).